Here is a 363-residue protein sequence, read N- to C-terminus: Chalcone synthase B (363 aa).

Cysteine 170 is a catalytic residue.

Belongs to the thiolase-like superfamily. Chalcone/stilbene synthases family.

The catalysed reaction is (E)-4-coumaroyl-CoA + 3 malonyl-CoA + 3 H(+) = 2',4,4',6'-tetrahydroxychalcone + 3 CO2 + 4 CoA. It functions in the pathway secondary metabolite biosynthesis; flavonoid biosynthesis. In terms of biological role, the primary product of this enzyme is 4,2',4',6'-tetrahydroxychalcone (also termed naringenin-chalcone or chalcone) which can under specific conditions spontaneously isomerize into naringenin. This is Chalcone synthase B (CHSB) from Ipomoea nil (Japanese morning glory).